Here is an 83-residue protein sequence, read N- to C-terminus: Probable calcium-binding protein CML28 (83 aa).

EF-hand domains follow at residues 5 to 40 (TEKA…LGSV) and 43 to 75 (EDIK…NRGL). D18, N20, D22, K24, E29, D53, D55, D57, Y59, and E64 together coordinate Ca(2+).

Its function is as follows. Potential calcium sensor. This chain is Probable calcium-binding protein CML28 (CML28), found in Arabidopsis thaliana (Mouse-ear cress).